A 158-amino-acid chain; its full sequence is MPRKPPSSPKSSPLQLGRAVAWPDSPEQAKLDRVPNPQKGTNYVARFTAPEFTALCPVTGQPDFAHLVIDYVPGSWLLESKSLKLYLASFRNHGAFHEDCTVAIGKRIVAAIKPKWLRIGGYWFPRGGIPIDVFWQTGAAPRGVWIPDQDVPSYRGRG.

Catalysis depends on Cys56, which acts as the Thioimide intermediate. The Proton donor role is filled by Asp63. Substrate is bound by residues 78 to 80 and 97 to 98; these read LES and HE.

This sequence belongs to the GTP cyclohydrolase I family. QueF type 1 subfamily.

It is found in the cytoplasm. It catalyses the reaction 7-aminomethyl-7-carbaguanine + 2 NADP(+) = 7-cyano-7-deazaguanine + 2 NADPH + 3 H(+). It functions in the pathway tRNA modification; tRNA-queuosine biosynthesis. Catalyzes the NADPH-dependent reduction of 7-cyano-7-deazaguanine (preQ0) to 7-aminomethyl-7-deazaguanine (preQ1). This Nitrobacter winogradskyi (strain ATCC 25391 / DSM 10237 / CIP 104748 / NCIMB 11846 / Nb-255) protein is NADPH-dependent 7-cyano-7-deazaguanine reductase.